Here is a 592-residue protein sequence, read N- to C-terminus: Bifunctional dolabella-3,7-dien-18-ol synthase/dolathalia-3,7,11-triene synthase TPS20, chloroplastic (592 aa).

The transit peptide at Met1–Asn52 directs the protein to the chloroplast. Mg(2+)-binding residues include Asp349, Asp353, Asp491, Thr495, and Glu499. The DDXXD motif motif lies at Asp349–Asp353.

The protein belongs to the terpene synthase family. Tpsa subfamily. It depends on Mg(2+) as a cofactor. Mn(2+) is required as a cofactor.

It is found in the plastid. Its subcellular location is the chloroplast. It catalyses the reaction (2E,6E,10E)-geranylgeranyl diphosphate + H2O = (3E,7E)-dolabella-3,7-dien-18-ol + diphosphate. The catalysed reaction is (2E,6E,10E)-geranylgeranyl diphosphate = (3E,7E)-dolathalia-3,7,11-triene + diphosphate. The protein operates within secondary metabolite biosynthesis; terpenoid biosynthesis. Involved in the biosynthesis of diterpenes in roots. Possesses dolabella-3,7-dien-18-ol synthase activity and dolathalia-3,7,11-triene synthase activity in vitro. Catalyzes the formation of dolabella-3,7-dien-18-ol and dolathalia-3,7,11-triene from geranygeranyl diphosphate (GGPP). Does not seem to be involved in sesquiterpene biosynthesis. The polypeptide is Bifunctional dolabella-3,7-dien-18-ol synthase/dolathalia-3,7,11-triene synthase TPS20, chloroplastic (Arabidopsis thaliana (Mouse-ear cress)).